Consider the following 204-residue polypeptide: Lysozyme g (204 aa).

The N-terminal stretch at 1-19 (MHLMLVLLGLAALLGTSQS) is a signal peptide. 2 cysteine pairs are disulfide-bonded: C23/C79 and C37/C48. Catalysis depends on residues E92 and D105.

Belongs to the glycosyl hydrolase 23 family.

Its subcellular location is the secreted. The catalysed reaction is Hydrolysis of (1-&gt;4)-beta-linkages between N-acetylmuramic acid and N-acetyl-D-glucosamine residues in a peptidoglycan and between N-acetyl-D-glucosamine residues in chitodextrins.. Its function is as follows. Has bacteriolytic activity against M.luteus. In Struthio camelus (Common ostrich), this protein is Lysozyme g.